The following is a 225-amino-acid chain: Ribonuclease 3 (225 aa).

Residues 5-127 (LDRLQRSLGH…VFAATFLDQG (123 aa)) enclose the RNase III domain. Residue glutamate 40 participates in Mg(2+) binding. Aspartate 44 is an active-site residue. 2 residues coordinate Mg(2+): aspartate 113 and glutamate 116. Glutamate 116 is a catalytic residue. The region spanning 154–224 (DPKTALQELL…AELALAQLRK (71 aa)) is the DRBM domain.

This sequence belongs to the ribonuclease III family. Homodimer. Mg(2+) serves as cofactor.

The protein localises to the cytoplasm. The enzyme catalyses Endonucleolytic cleavage to 5'-phosphomonoester.. Its function is as follows. Digests double-stranded RNA. Involved in the processing of primary rRNA transcript to yield the immediate precursors to the large and small rRNAs (23S and 16S). Processes some mRNAs, and tRNAs when they are encoded in the rRNA operon. Processes pre-crRNA and tracrRNA of type II CRISPR loci if present in the organism. The protein is Ribonuclease 3 of Aromatoleum aromaticum (strain DSM 19018 / LMG 30748 / EbN1) (Azoarcus sp. (strain EbN1)).